The chain runs to 255 residues: D-aminoacyl-tRNA deacylase (255 aa).

The protein belongs to the DtdA deacylase family. As to quaternary structure, monomer. The cofactor is Zn(2+).

It catalyses the reaction a D-aminoacyl-tRNA + H2O = a tRNA + a D-alpha-amino acid + H(+). The enzyme catalyses glycyl-tRNA(Ala) + H2O = tRNA(Ala) + glycine + H(+). In terms of biological role, D-aminoacyl-tRNA deacylase with broad substrate specificity. By recycling D-aminoacyl-tRNA to D-amino acids and free tRNA molecules, this enzyme counteracts the toxicity associated with the formation of D-aminoacyl-tRNA entities in vivo. This is D-aminoacyl-tRNA deacylase from Picrophilus torridus (strain ATCC 700027 / DSM 9790 / JCM 10055 / NBRC 100828 / KAW 2/3).